Consider the following 229-residue polypeptide: Uracil-DNA glycosylase (229 aa).

Aspartate 64 acts as the Proton acceptor in catalysis.

It belongs to the uracil-DNA glycosylase (UDG) superfamily. UNG family.

The protein localises to the cytoplasm. It catalyses the reaction Hydrolyzes single-stranded DNA or mismatched double-stranded DNA and polynucleotides, releasing free uracil.. Excises uracil residues from the DNA which can arise as a result of misincorporation of dUMP residues by DNA polymerase or due to deamination of cytosine. The polypeptide is Uracil-DNA glycosylase (Geobacillus kaustophilus (strain HTA426)).